Consider the following 138-residue polypeptide: Putative pre-16S rRNA nuclease (138 aa).

Belongs to the YqgF nuclease family.

The protein resides in the cytoplasm. Could be a nuclease involved in processing of the 5'-end of pre-16S rRNA. The sequence is that of Putative pre-16S rRNA nuclease from Listeria innocua serovar 6a (strain ATCC BAA-680 / CLIP 11262).